A 121-amino-acid polypeptide reads, in one-letter code: Small ribosomal subunit protein uS13 (121 aa).

The disordered stretch occupies residues 88–121 (GMRHRRGLPVRGQHTKNNARTRKGKAVAIANKKK).

This sequence belongs to the universal ribosomal protein uS13 family. Part of the 30S ribosomal subunit. Forms a loose heterodimer with protein S19. Forms two bridges to the 50S subunit in the 70S ribosome.

Located at the top of the head of the 30S subunit, it contacts several helices of the 16S rRNA. In the 70S ribosome it contacts the 23S rRNA (bridge B1a) and protein L5 of the 50S subunit (bridge B1b), connecting the 2 subunits; these bridges are implicated in subunit movement. Contacts the tRNAs in the A and P-sites. This is Small ribosomal subunit protein uS13 from Limosilactobacillus reuteri subsp. reuteri (strain JCM 1112) (Lactobacillus reuteri).